The following is a 312-amino-acid chain: Very-long-chain 3-oxoacyl-CoA reductase (312 aa).

The helical transmembrane segment at 4 to 24 (ALPAAGFLYWVGASTVAYLAL) threads the bilayer. Position 50–79 (50–79 (GEWAVVTGGTDGIGKSYAEELAKRGMKIVL)) interacts with NADP(+). 2 helical membrane-spanning segments follow: residues 182–202 (GAIL…LTIY) and 271–291 (GYPI…WLYF). Ser-189 is a substrate binding site. Tyr-202 (proton acceptor) is an active-site residue. A Di-lysine motif motif is present at residues 308–312 (KMKMN).

The protein belongs to the short-chain dehydrogenases/reductases (SDR) family. 17-beta-HSD 3 subfamily.

Its subcellular location is the endoplasmic reticulum membrane. It carries out the reaction a very-long-chain (3R)-3-hydroxyacyl-CoA + NADP(+) = a very-long-chain 3-oxoacyl-CoA + NADPH + H(+). The catalysed reaction is 17beta-estradiol + NAD(+) = estrone + NADH + H(+). The enzyme catalyses 17beta-estradiol + NADP(+) = estrone + NADPH + H(+). It catalyses the reaction 3-oxooctadecanoyl-CoA + NADPH + H(+) = (3R)-hydroxyoctadecanoyl-CoA + NADP(+). It carries out the reaction (7Z,10Z,13Z,16Z)-3-oxodocosatetraenoyl-CoA + NADPH + H(+) = (3R)-hydroxy-(7Z,10Z,13Z,16Z)-docosatetraenoyl-CoA + NADP(+). The catalysed reaction is 3-oxo-(7Z,10Z,13Z,16Z,19Z)-docosapentaenoyl-CoA + NADPH + H(+) = (3R)-hydroxy-(7Z,10Z,13Z,16Z,19Z)-docosapentaenoyl-CoA + NADP(+). The enzyme catalyses (8Z,11Z,14Z)-3-oxoeicosatrienoyl-CoA + NADPH + H(+) = (3R)-hydroxy-(8Z,11Z,14Z)-eicosatrienoyl-CoA + NADP(+). It functions in the pathway lipid metabolism; fatty acid biosynthesis. The protein operates within steroid biosynthesis; estrogen biosynthesis. Functionally, catalyzes the second of the four reactions of the long-chain fatty acids elongation cycle. This endoplasmic reticulum-bound enzymatic process, allows the addition of two carbons to the chain of long- and very long-chain fatty acids/VLCFAs per cycle. This enzyme has a 3-ketoacyl-CoA reductase activity, reducing 3-ketoacyl-CoA to 3-hydroxyacyl-CoA, within each cycle of fatty acid elongation. Thereby, it may participate in the production of VLCFAs of different chain lengths that are involved in multiple biological processes as precursors of membrane lipids and lipid mediators. May also catalyze the transformation of estrone (E1) into estradiol (E2) and play a role in estrogen formation. The polypeptide is Very-long-chain 3-oxoacyl-CoA reductase (HSD17B12) (Bos taurus (Bovine)).